The chain runs to 132 residues: ATP synthase epsilon chain (132 aa).

It belongs to the ATPase epsilon chain family. As to quaternary structure, F-type ATPases have 2 components, CF(1) - the catalytic core - and CF(0) - the membrane proton channel. CF(1) has five subunits: alpha(3), beta(3), gamma(1), delta(1), epsilon(1). CF(0) has three main subunits: a, b and c.

It is found in the cell membrane. Its function is as follows. Produces ATP from ADP in the presence of a proton gradient across the membrane. In Bacillus caldotenax, this protein is ATP synthase epsilon chain (atpC).